A 188-amino-acid chain; its full sequence is Potassium-transporting ATPase KdpC subunit (188 aa).

A helical transmembrane segment spans residues 13–33; sequence MTAIFWIGCGLAYPLIFTGFA.

This sequence belongs to the KdpC family. In terms of assembly, the system is composed of three essential subunits: KdpA, KdpB and KdpC.

The protein localises to the cell inner membrane. In terms of biological role, part of the high-affinity ATP-driven potassium transport (or Kdp) system, which catalyzes the hydrolysis of ATP coupled with the electrogenic transport of potassium into the cytoplasm. This subunit acts as a catalytic chaperone that increases the ATP-binding affinity of the ATP-hydrolyzing subunit KdpB by the formation of a transient KdpB/KdpC/ATP ternary complex. In Gloeobacter violaceus (strain ATCC 29082 / PCC 7421), this protein is Potassium-transporting ATPase KdpC subunit.